Here is a 408-residue protein sequence, read N- to C-terminus: MSVDDSADVVVVGAGPAGSAAAAWAARAGRDVLVIDTATFPRDKPCGDGLTPRAVAELHQLGLGKWLADHIRHRGLRMSGFGGEVEVDWPGPSFPSYGSAVARLELDDRIRKVAEDTGARMLLGAKAVAVHHDSSRRVVSLTLADGTEVGCRQLIVADGARSPLGRKLGRRWHRETVYGVAVRGYLSTAYSDDPWLTSHLELRSPDGAVLPGYGWIFPLGNGEVNIGVGALSTSRRPADLALRPLISYYTDLRRDEWGFTGQPRAVSSALLPMGGAVSGVAGSNWMLIGDAAACVNPLNGEGIDYGLETGRLAAELLDSRDLARLWPSLLADRYGRGFSVARRLALLLTFPRFLPTTGPITMRSTALMNIAVRVMSNLVTDDDRDWVARVWRGGGQLSRLVDRRPPFS.

Residues 13–17 (GAGPA), 46–49 (CGDG), Arg103, Ala127, Asp290, and 302–303 (GI) contribute to the FAD site.

The protein belongs to the geranylgeranyl reductase family. FAD serves as cofactor.

The catalysed reaction is menaquinone-9 + AH2 = beta-dihydromenaquinone-9 + A. Its pathway is quinol/quinone metabolism; menaquinone biosynthesis. Catalyzes the reduction of a single double bond in the isoprenoid tail of menaquinone (MK-9) in M.tuberculosis, likely the beta-isoprene unit, forming the predominant form of menaquinone found in mycobacteria, MK-9(II-H2). The protein is Menaquinone reductase of Mycobacterium tuberculosis (strain CDC 1551 / Oshkosh).